Here is a 234-residue protein sequence, read N- to C-terminus: NAD-dependent protein deacylase (234 aa).

Residues Met-1–Pro-234 enclose the Deacetylase sirtuin-type domain. Residue Gly-9–Trp-28 coordinates NAD(+). Positions 53 and 56 each coordinate substrate. Gln-86–Asp-89 is an NAD(+) binding site. His-104 (proton acceptor) is an active-site residue. Gly-175–Ser-177 is a binding site for NAD(+).

It belongs to the sirtuin family. Class III subfamily.

It is found in the cytoplasm. It carries out the reaction N(6)-acetyl-L-lysyl-[protein] + NAD(+) + H2O = 2''-O-acetyl-ADP-D-ribose + nicotinamide + L-lysyl-[protein]. The catalysed reaction is N(6)-succinyl-L-lysyl-[protein] + NAD(+) + H2O = 2''-O-succinyl-ADP-D-ribose + nicotinamide + L-lysyl-[protein]. Its function is as follows. NAD-dependent lysine deacetylase and desuccinylase that specifically removes acetyl and succinyl groups on target proteins. Modulates the activities of several proteins which are inactive in their acylated form. In Bacteroides thetaiotaomicron (strain ATCC 29148 / DSM 2079 / JCM 5827 / CCUG 10774 / NCTC 10582 / VPI-5482 / E50), this protein is NAD-dependent protein deacylase.